The primary structure comprises 363 residues: Endopolygalacturonase 1 (363 aa).

The signal sequence occupies residues 1–17; sequence MVSYLFVLGALASVAIA. Residues 18–26 constitute a propeptide that is removed on maturation; that stretch reads SPVPELKAR. Cysteine 29 and cysteine 44 are disulfide-bonded. PbH1 repeat units follow at residues 188-209, 210-230, 239-260, and 268-290; these read STGV…AVNS, GTNI…SIGS, VKSV…RIKT, and VSDI…VIEQ. Residue aspartate 202 is the Proton donor of the active site. An intrachain disulfide couples cysteine 204 to cysteine 220. N-linked (GlcNAc...) asparagine glycosylation occurs at asparagine 212. The active site involves histidine 224. 2 disulfide bridges follow: cysteine 330/cysteine 333 and cysteine 352/cysteine 363.

It belongs to the glycosyl hydrolase 28 family.

The protein resides in the secreted. It catalyses the reaction (1,4-alpha-D-galacturonosyl)n+m + H2O = (1,4-alpha-D-galacturonosyl)n + (1,4-alpha-D-galacturonosyl)m.. Its function is as follows. Involved in maceration and soft-rotting of plant tissue. Hydrolyzes the 1,4-alpha glycosidic bonds of de-esterified pectate in the smooth region of the plant cell wall. The chain is Endopolygalacturonase 1 (PG1) from Colletotrichum lindemuthianum (Bean anthracnose fungus).